We begin with the raw amino-acid sequence, 239 residues long: MAKRARKSKKNVSRARLLAQAMRRWLLRGMFGLGALMLVWIVAYAVVPVPTTIYMQQERARLGGIERDWVPMDQIAPVLARSVVAAEDANFCLHWGFDMTAIRDAIADGAARGGSTISQQTVKNAFLWHGRSWVRKALEAAITPVMELVWPKRRVLEVYLNVAEFAPGVFGAEAGAQHHFGVSAADLTARQASLMAAVLPNPQRRDAGSPSDLVNRRARSIADGAALIRADGRADCFAN.

Residues glycine 29–valine 49 form a helical membrane-spanning segment.

The protein belongs to the glycosyltransferase 51 family.

It localises to the cell inner membrane. It catalyses the reaction [GlcNAc-(1-&gt;4)-Mur2Ac(oyl-L-Ala-gamma-D-Glu-L-Lys-D-Ala-D-Ala)](n)-di-trans,octa-cis-undecaprenyl diphosphate + beta-D-GlcNAc-(1-&gt;4)-Mur2Ac(oyl-L-Ala-gamma-D-Glu-L-Lys-D-Ala-D-Ala)-di-trans,octa-cis-undecaprenyl diphosphate = [GlcNAc-(1-&gt;4)-Mur2Ac(oyl-L-Ala-gamma-D-Glu-L-Lys-D-Ala-D-Ala)](n+1)-di-trans,octa-cis-undecaprenyl diphosphate + di-trans,octa-cis-undecaprenyl diphosphate + H(+). The protein operates within cell wall biogenesis; peptidoglycan biosynthesis. Peptidoglycan polymerase that catalyzes glycan chain elongation from lipid-linked precursors. This chain is Biosynthetic peptidoglycan transglycosylase, found in Jannaschia sp. (strain CCS1).